Here is a 147-residue protein sequence, read N- to C-terminus: Putative pre-16S rRNA nuclease (147 aa).

This sequence belongs to the YqgF nuclease family.

It is found in the cytoplasm. Functionally, could be a nuclease involved in processing of the 5'-end of pre-16S rRNA. The protein is Putative pre-16S rRNA nuclease of Acinetobacter baylyi (strain ATCC 33305 / BD413 / ADP1).